Consider the following 167-residue polypeptide: Leptin (167 aa).

An N-terminal signal peptide occupies residues 1-21 (MRCGPLCRFLWLWPYLSCVEA). Residues cysteine 117 and cysteine 167 are joined by a disulfide bond.

This sequence belongs to the leptin family.

Its subcellular location is the secreted. Key player in the regulation of energy balance and body weight control. Once released into the circulation, has central and peripheral effects by binding LEPR, found in many tissues, which results in the activation of several major signaling pathways. In the hypothalamus, acts as an appetite-regulating factor that induces a decrease in food intake and an increase in energy consumption by inducing anorexinogenic factors and suppressing orexigenic neuropeptides, also regulates bone mass and secretion of hypothalamo-pituitary-adrenal hormones. In the periphery, increases basal metabolism, influences reproductive function, regulates pancreatic beta-cell function and insulin secretion, is pro-angiogenic for endothelial cell and affects innate and adaptive immunity. In the arcuate nucleus of the hypothalamus, activates by depolarization POMC neurons inducing FOS and SOCS3 expression to release anorexigenic peptides and inhibits by hyperpolarization NPY neurons inducing SOCS3 with a consequent reduction on release of orexigenic peptides. In addition to its known satiety inducing effect, has a modulatory role in nutrient absorption. In the intestine, reduces glucose absorption by enterocytes by activating PKC and leading to a sequential activation of p38, PI3K and ERK signaling pathways which exerts an inhibitory effect on glucose absorption. Acts as a growth factor on certain tissues, through the activation of different signaling pathways increases expression of genes involved in cell cycle regulation such as CCND1, via JAK2-STAT3 pathway, or VEGFA, via MAPK1/3 and PI3K-AKT1 pathways. May also play an apoptotic role via JAK2-STAT3 pathway and up-regulation of BIRC5 expression. Pro-angiogenic, has mitogenic activity on vascular endothelial cells and plays a role in matrix remodeling by regulating the expression of matrix metalloproteinases (MMPs) and tissue inhibitors of metalloproteinases (TIMPs). In innate immunity, modulates the activity and function of neutrophils by increasing chemotaxis and the secretion of oxygen radicals. Increases phagocytosis by macrophages and enhances secretion of pro-inflammatory mediators. Increases cytotoxic ability of NK cells. Plays a pro-inflammatory role, in synergy with IL1B, by inducing NOS2 which promotes the production of IL6, IL8 and Prostaglandin E2, through a signaling pathway that involves JAK2, PI3K, MAP2K1/MEK1 and MAPK14/p38. In adaptive immunity, promotes the switch of memory T-cells towards T helper-1 cell immune responses. Increases CD4(+)CD25(-) T-cell proliferation and reduces autophagy during TCR (T-cell receptor) stimulation, through MTOR signaling pathway activation and BCL2 up-regulation. The sequence is that of Leptin (LEP) from Canis lupus familiaris (Dog).